The sequence spans 253 residues: tRNA-cytidine(32) 2-sulfurtransferase 2 (253 aa).

The PP-loop motif motif lies at 33-38; that stretch reads SGGKDS. Residues Cys108, Cys111, and Cys199 each contribute to the [4Fe-4S] cluster site.

Belongs to the TtcA family. In terms of assembly, homodimer. It depends on Mg(2+) as a cofactor. [4Fe-4S] cluster serves as cofactor.

It localises to the cytoplasm. The enzyme catalyses cytidine(32) in tRNA + S-sulfanyl-L-cysteinyl-[cysteine desulfurase] + AH2 + ATP = 2-thiocytidine(32) in tRNA + L-cysteinyl-[cysteine desulfurase] + A + AMP + diphosphate + H(+). It participates in tRNA modification. Its function is as follows. Catalyzes the ATP-dependent 2-thiolation of cytidine in position 32 of tRNA, to form 2-thiocytidine (s(2)C32). The sulfur atoms are provided by the cysteine/cysteine desulfurase (IscS) system. The sequence is that of tRNA-cytidine(32) 2-sulfurtransferase 2 from Francisella tularensis subsp. novicida (strain U112).